The following is a 121-amino-acid chain: Large ribosomal subunit protein bL12 (121 aa).

The protein belongs to the bacterial ribosomal protein bL12 family. As to quaternary structure, homodimer. Part of the ribosomal stalk of the 50S ribosomal subunit. Forms a multimeric L10(L12)X complex, where L10 forms an elongated spine to which 2 to 4 L12 dimers bind in a sequential fashion. Binds GTP-bound translation factors.

Its function is as follows. Forms part of the ribosomal stalk which helps the ribosome interact with GTP-bound translation factors. Is thus essential for accurate translation. The chain is Large ribosomal subunit protein bL12 from Mesomycoplasma hyopneumoniae (strain 7448) (Mycoplasma hyopneumoniae).